Here is an 879-residue protein sequence, read N- to C-terminus: MLKFIKSIFKTPSDRIIANLKSKIQQVHSAESSLAKLSNIELRNKTNEFKARLANNEPIDNIQYEAFAVVREAAKRTIGIQHYDEQLIGGILLHQGKVIEMSTGEGKTLVATLPSYLNALIGKGVHVVTVNDYLAQRDSDWMGTIHRFLDITVGCITSNTNEHARKIAYNSDITYITNNELGFDFLRDNMQFTNQSKVQRGCNYAIIDEIDSILIDEARTPLIISGPVSDNTSLYPIINKLITKLNKDDYEMDEKLRNVTLTDSGINKLETMLAEINILAPNSNSLYDFENMHLIHYINQSLKAHTLFRRNVDYLVKNGKVIIIDEFTGRTMDSRRYSEGLHQALEAKEKVEIQNENQTLASITFQNYFRMYTKLSGMTGTAMTEATELKEIYDLDVVTVPTHNPVQRIDYNDEIYSTKKDKYSAIIQLIQECYSKGQPVLVGTVSIEKSEELSKLLHSKKIPHNVLNAKHHDKEASIIAQAGRIKAITIATNMAGRGTDIMLGGNAEMLVDQSNLTEEEYQEKLKITKMQIEQEKEQVINAGGLFVIGTERHESRRIDNQLRGRCGRQGDPGQTKFFLSLEDDLMRIFASDRVTKILRTIGLKDGEAIHHPLINRSLATAQQKIEAQNYEIRKNLLKYDNVMNDQRKVIYEQRNEAISSDNVNEILHNLTEELIVETVHKFIPPKSYKEDWNIHELLKEYHHIFNVKLQPASIEATSSSSEVIEYLTKTALDIYKQQEQDYSAKSANEAIKHIFIKTLDQTWKEHLYTLDHLKQGISLRAYGQKDPLNEYKREAFDLFKQMLLHLKYLFIQRVARLHIDLASSPKSTSSLLETSDNNLKGKIITENSMAHKYFGKISRNQLCPCNSGKKFKHCHGALK.

ATP-binding positions include Q86, 104 to 108 (GEGKT), and D500. Positions 863, 865, 874, and 875 each coordinate Zn(2+).

The protein belongs to the SecA family. In terms of assembly, monomer and homodimer. Part of the essential Sec protein translocation apparatus which comprises SecA, SecYEG and auxiliary proteins SecDF-YajC and YidC. The cofactor is Zn(2+).

It is found in the cell inner membrane. The protein resides in the cytoplasm. It carries out the reaction ATP + H2O + cellular proteinSide 1 = ADP + phosphate + cellular proteinSide 2.. Its function is as follows. Part of the Sec protein translocase complex. Interacts with the SecYEG preprotein conducting channel. Has a central role in coupling the hydrolysis of ATP to the transfer of proteins into and across the cell membrane, serving both as a receptor for the preprotein-SecB complex and as an ATP-driven molecular motor driving the stepwise translocation of polypeptide chains across the membrane. In Orientia tsutsugamushi (strain Ikeda) (Rickettsia tsutsugamushi), this protein is Protein translocase subunit SecA.